Consider the following 440-residue polypeptide: COP9 signalosome complex subunit 5 (440 aa).

The MPN domain occupies 71-218; it reads VLISKLSCEK…MGAFRTIESK (148 aa). Residues histidine 164, histidine 166, and aspartate 177 each coordinate Zn(2+). Positions 164–177 match the JAMM motif motif; sequence HSHPGYDCWLSNID. Polar residues predominate over residues 319–341; it reads TQRGDSTETSSFGSMFSGDNTSD. Disordered regions lie at residues 319–343 and 375–399; these read TQRGDSTETSSFGSMFSGDNTSDVD and SSRSTDNFHNSKKRMNSNQERCHDE.

The protein belongs to the peptidase M67A family. CSN5 subfamily. Component of a COP9 signalosome-like (CSN) complex, composed of at least RRI1/CSN5, CSN9, RRI2/CSN10, PCI8/CSN11, CSN12 and CSI1. Within this complex it probably interacts directly with CSN12. Also interacts with RPN5. It depends on a divalent metal cation as a cofactor.

The protein localises to the cytoplasm. It localises to the nucleus. Functionally, catalytic component of the COP9 signalosome (CSN) complex that acts as an regulator of the ubiquitin (Ubl) conjugation pathway by mediating the deneddylation of the cullin subunit of SCF-type E3 ubiquitin-protein ligase complexes. The CSN complex is involved in the regulation of the mating pheromone response. The polypeptide is COP9 signalosome complex subunit 5 (RRI1) (Saccharomyces cerevisiae (strain ATCC 204508 / S288c) (Baker's yeast)).